A 138-amino-acid chain; its full sequence is Putative nickel-responsive regulator (138 aa).

Ni(2+) contacts are provided by histidine 78, histidine 89, histidine 91, and cysteine 97.

Belongs to the transcriptional regulatory CopG/NikR family. Ni(2+) is required as a cofactor.

Functionally, transcriptional regulator. In Pyrococcus abyssi (strain GE5 / Orsay), this protein is Putative nickel-responsive regulator.